Consider the following 149-residue polypeptide: 3-hydroxyacyl-[acyl-carrier-protein] dehydratase FabZ (149 aa).

His53 is an active-site residue.

This sequence belongs to the thioester dehydratase family. FabZ subfamily.

The protein localises to the cytoplasm. The catalysed reaction is a (3R)-hydroxyacyl-[ACP] = a (2E)-enoyl-[ACP] + H2O. In terms of biological role, involved in unsaturated fatty acids biosynthesis. Catalyzes the dehydration of short chain beta-hydroxyacyl-ACPs and long chain saturated and unsaturated beta-hydroxyacyl-ACPs. This is 3-hydroxyacyl-[acyl-carrier-protein] dehydratase FabZ from Neisseria meningitidis serogroup B (strain ATCC BAA-335 / MC58).